The sequence spans 732 residues: Translation initiation factor eIF2B subunit epsilon (732 aa).

The W2 domain maps to 559–726; sequence GEEEEDFGVE…QEADEEDSDE (168 aa).

It belongs to the eIF-2B gamma/epsilon subunits family. In terms of assembly, component of the translation initiation factor 2B (eIF2B) complex which is a heterodecamer of two sets of five different subunits: alpha, beta, gamma, delta and epsilon. Subunits alpha, beta and delta comprise a regulatory subcomplex and subunits epsilon and gamma comprise a catalytic subcomplex. Within the complex, the hexameric regulatory complex resides at the center, with the two heterodimeric catalytic subcomplexes bound on opposite sides.

It localises to the cytoplasm. It is found in the cytosol. Its function is as follows. Acts as a component of the translation initiation factor 2B (eIF2B) complex, which catalyzes the exchange of GDP for GTP on the eukaryotic initiation factor 2 (eIF2) complex gamma subunit. Its guanine nucleotide exchange factor activity is repressed when bound to eIF2 complex phosphorylated on the alpha subunit, thereby limiting the amount of methionyl-initiator methionine tRNA available to the ribosome and consequently global translation is repressed. This chain is Translation initiation factor eIF2B subunit epsilon (GCD6), found in Candida albicans (strain SC5314 / ATCC MYA-2876) (Yeast).